The chain runs to 71 residues: MDIVKSIYTSVDAVLDELDCAYFAVTLKVEFKTGKLLVCIGFGDTLLAAKDKAYAKLGLSIIEEVNSHIVV.

This chain is Non-structural protein 3a, found in Sus scrofa (Pig).